Here is a 336-residue protein sequence, read N- to C-terminus: 4-hydroxy-3-methylbut-2-enyl diphosphate reductase (336 aa).

Positions 1–23 (MFGQRLDTLGAMSSSVSSPSPET) are disordered. Cysteine 36 is a binding site for [4Fe-4S] cluster. Residues histidine 65 and histidine 98 each coordinate (2E)-4-hydroxy-3-methylbut-2-enyl diphosphate. Dimethylallyl diphosphate contacts are provided by histidine 65 and histidine 98. Isopentenyl diphosphate contacts are provided by histidine 65 and histidine 98. Residue cysteine 120 coordinates [4Fe-4S] cluster. Position 148 (histidine 148) interacts with (2E)-4-hydroxy-3-methylbut-2-enyl diphosphate. Residue histidine 148 coordinates dimethylallyl diphosphate. Histidine 148 provides a ligand contact to isopentenyl diphosphate. Residue glutamate 150 is the Proton donor of the active site. Threonine 190 is a binding site for (2E)-4-hydroxy-3-methylbut-2-enyl diphosphate. Cysteine 220 contacts [4Fe-4S] cluster. Serine 248, serine 249, asparagine 250, and serine 293 together coordinate (2E)-4-hydroxy-3-methylbut-2-enyl diphosphate. The dimethylallyl diphosphate site is built by serine 248, serine 249, asparagine 250, and serine 293. Residues serine 248, serine 249, asparagine 250, and serine 293 each contribute to the isopentenyl diphosphate site.

The protein belongs to the IspH family. It depends on [4Fe-4S] cluster as a cofactor.

The enzyme catalyses isopentenyl diphosphate + 2 oxidized [2Fe-2S]-[ferredoxin] + H2O = (2E)-4-hydroxy-3-methylbut-2-enyl diphosphate + 2 reduced [2Fe-2S]-[ferredoxin] + 2 H(+). It catalyses the reaction dimethylallyl diphosphate + 2 oxidized [2Fe-2S]-[ferredoxin] + H2O = (2E)-4-hydroxy-3-methylbut-2-enyl diphosphate + 2 reduced [2Fe-2S]-[ferredoxin] + 2 H(+). It functions in the pathway isoprenoid biosynthesis; dimethylallyl diphosphate biosynthesis; dimethylallyl diphosphate from (2E)-4-hydroxy-3-methylbutenyl diphosphate: step 1/1. The protein operates within isoprenoid biosynthesis; isopentenyl diphosphate biosynthesis via DXP pathway; isopentenyl diphosphate from 1-deoxy-D-xylulose 5-phosphate: step 6/6. Functionally, catalyzes the conversion of 1-hydroxy-2-methyl-2-(E)-butenyl 4-diphosphate (HMBPP) into a mixture of isopentenyl diphosphate (IPP) and dimethylallyl diphosphate (DMAPP). Acts in the terminal step of the DOXP/MEP pathway for isoprenoid precursor biosynthesis. In Corynebacterium efficiens (strain DSM 44549 / YS-314 / AJ 12310 / JCM 11189 / NBRC 100395), this protein is 4-hydroxy-3-methylbut-2-enyl diphosphate reductase.